The chain runs to 335 residues: Arylacetonitrilase (335 aa).

Positions 6–291 (LKVAITQAQP…EGIVYADLDM (286 aa)) constitute a CN hydrolase domain. Glu46 (proton acceptor) is an active-site residue. The active site involves Lys127. Cys168 serves as the catalytic Nucleophile.

Belongs to the carbon-nitrogen hydrolase superfamily. Nitrilase family.

It catalyses the reaction a nitrile + 2 H2O = a carboxylate + NH4(+). It carries out the reaction 4-chlorophenylacetonitrile + 2 H2O = 4-chlorophenylacetate + NH4(+). In terms of biological role, nitrilase that hydrolyzes preferentially phenylacetonitrile, (R,S)-mandelonitrile, and 3-indolylacetonitrile. The sequence is that of Arylacetonitrilase from Arthroderma benhamiae (strain ATCC MYA-4681 / CBS 112371) (Trichophyton mentagrophytes).